We begin with the raw amino-acid sequence, 548 residues long: Sterol esterase TGL1 (548 aa).

Methionine 1 bears the N-acetylmethionine; partial mark. The Lumenal segment spans residues 1-13 (MYFPFLGRLSITD). A helical transmembrane segment spans residues 14 to 34 (YIIVVLVYIESIISSVLKLIP). Over 35–548 (QPMINLFEWL…TTALDALNKE (514 aa)) the chain is Cytoplasmic. In terms of domain architecture, AB hydrolase-1 spans 107 to 402 (VVYLHHGLLM…NYEHLDLIWG (296 aa)). Residues 199–203 (GFSQG) carry the GXSXG motif. The active-site Nucleophile is the serine 201. A Glycyl lysine isopeptide (Lys-Gly) (interchain with G-Cter in ubiquitin) cross-link involves residue lysine 246. Catalysis depends on charge relay system residues aspartate 369 and histidine 396. Disordered regions lie at residues 449-477 (TTHPTHGLSYRTHSADRSPLSVQADEADE) and 496-516 (IDEDNENEHQDDTEDQIHKEQ). Serine 462 and serine 466 each carry phosphoserine. Basic and acidic residues predominate over residues 502–516 (NEHQDDTEDQIHKEQ). A phosphoserine mark is found at serine 521 and serine 538. A disordered region spans residues 528–548 (KDLRQLDANSSTTALDALNKE). A Phosphothreonine modification is found at threonine 539.

Belongs to the AB hydrolase superfamily. In terms of processing, not N-glycosylated.

Its subcellular location is the lipid droplet. The protein resides in the membrane. It catalyses the reaction a sterol ester + H2O = a sterol + a fatty acid + H(+). Functionally, mediates the hydrolysis of steryl esters (SE). Preferentially hydrolyzes ergosteryl and zymosteryl esters. Required for mobilization of SEs from lipid particles/droplets, thereby playing a central role in lipid metabolism and sterol homeostasis. Sterol intermediates stored in SE and set free by SE hydrolases are recycled to the sterol biosynthetic pathway and converted to the final product, ergosterol, in the endoplasmic reticulum. Also has weak lipase activity toward triglycerides at neutral pH, however, the physiological relevance of this activity is unclear. This Saccharomyces cerevisiae (strain ATCC 204508 / S288c) (Baker's yeast) protein is Sterol esterase TGL1 (TGL1).